The following is a 227-amino-acid chain: uncharacterized protein (227 aa).

2 helical membrane passes run 7–24 and 135–157; these read FVYAVLLVICYLVGVTWA and VVVIIVIWIISILVIYMLFLMCL.

This sequence belongs to the TMEM9 family.

Its subcellular location is the membrane. This is an uncharacterized protein from Drosophila melanogaster (Fruit fly).